The sequence spans 495 residues: Putative lon protease homolog (495 aa).

G52–S59 is an ATP binding site. Residues Y471 to E495 form a disordered region. A compositionally biased stretch (polar residues) spans S472–Y486.

This sequence belongs to the peptidase S16 family.

This chain is Putative lon protease homolog, found in Thermoplasma volcanium (strain ATCC 51530 / DSM 4299 / JCM 9571 / NBRC 15438 / GSS1).